The following is a 132-amino-acid chain: MSSQPNKNLKVFDNPNIERNFIIQINMPEFTCLCPKTGQPDFATLYLEYIADKVCIELKSLKMYIWSYRSKGEFHEAVTNKILDDLIQISNPRFMRLKAIFNVRGGIYTTIIAEYQQKNWTFKTKIDLQYQG.

Cys-34 (thioimide intermediate) is an active-site residue. Asp-41 functions as the Proton donor in the catalytic mechanism. Substrate-binding positions include 56–58 (IEL) and 75–76 (HE).

It belongs to the GTP cyclohydrolase I family. QueF type 1 subfamily.

The protein localises to the cytoplasm. The catalysed reaction is 7-aminomethyl-7-carbaguanine + 2 NADP(+) = 7-cyano-7-deazaguanine + 2 NADPH + 3 H(+). It participates in tRNA modification; tRNA-queuosine biosynthesis. Functionally, catalyzes the NADPH-dependent reduction of 7-cyano-7-deazaguanine (preQ0) to 7-aminomethyl-7-deazaguanine (preQ1). The chain is NADPH-dependent 7-cyano-7-deazaguanine reductase from Vesicomyosocius okutanii subsp. Calyptogena okutanii (strain HA).